Reading from the N-terminus, the 319-residue chain is Cobalamin biosynthesis protein CobD (319 aa).

Helical transmembrane passes span 55 to 75, 78 to 98, 153 to 173, and 296 to 316; these read AVMWLVVVGVTWAVSWGVLAL, EIHPWFGWLVEIWMIFTVLAG, VDGIIAPLFFLFLGGAPLAMA, and LMWVASTLALALFIAVRCLLV.

The protein belongs to the CobD/CbiB family.

The protein localises to the cell membrane. The protein operates within cofactor biosynthesis; adenosylcobalamin biosynthesis. Its function is as follows. Converts cobyric acid to cobinamide by the addition of aminopropanol on the F carboxylic group. The sequence is that of Cobalamin biosynthesis protein CobD from Citrobacter koseri (strain ATCC BAA-895 / CDC 4225-83 / SGSC4696).